A 694-amino-acid chain; its full sequence is Phosphatase and actin regulator 4 (694 aa).

2 disordered regions span residues 1 to 354 (MEDP…SPLV) and 375 to 405 (QDISQQEDQKTEVPKKIQDQSFGESHIPSRL). The segment covering 45–54 (KPWKWRKKKS) has biased composition (basic residues). Positions 55-84 (SDKFKETSEVLERKISMRKPREELVKRGVL) are enriched in basic and acidic residues. An RPEL 1 repeat occupies 63-88 (EVLERKISMRKPREELVKRGVLLEDP). A phosphoserine mark is found at Ser116, Ser118, Ser129, and Ser145. Composition is skewed to low complexity over residues 184-209 (AGSTARSVSSTSGSTTVTSAATTAAT) and 231-249 (TLPAAPASANTAATTTAPA). Residues 250 to 259 (KQPPIPPPKP) show a composition bias toward pro residues. Ser264, Ser285, Ser335, and Ser337 each carry phosphoserine. The segment covering 329 to 352 (LIIPPSSPSPPLPTHIPPEPPRSP) has biased composition (pro residues). A compositionally biased stretch (basic and acidic residues) spans 381-392 (EDQKTEVPKKIQ). Ser420 is subject to Phosphoserine. At Thr425 the chain carries Phosphothreonine. Phosphoserine occurs at positions 436, 446, 457, 503, 505, 549, and 582. Residues 467-562 (VPDDEEEEQT…TNLNSWPRKS (96 aa)) form a disordered region. A compositionally biased stretch (polar residues) spans 546–559 (SRPSEPETNLNSWP). RPEL repeat units lie at residues 575–600 (NTLIRRLSQRPTAEELEQRNILQPKN) and 613–638 (RRLTRKLSQRPTVAELLARKILRFNE). The segment at 589–608 (ELEQRNILQPKNEADRQAEK) is disordered. Ser620 bears the Phosphoserine mark.

This sequence belongs to the phosphatase and actin regulator family. In terms of assembly, binds PPP1CA and actin.

The protein localises to the cytoplasm. Its subcellular location is the cell projection. It is found in the lamellipodium. Its function is as follows. Regulator of protein phosphatase 1 (PP1) required for neural tube and optic fissure closure, and enteric neural crest cell (ENCCs) migration during development. Acts as an activator of PP1 by interacting with PPP1CA and preventing phosphorylation of PPP1CA at 'Thr-320'. During neural tube closure, localizes to the ventral neural tube and activates PP1, leading to down-regulate cell proliferation within cranial neural tissue and the neural retina. Also acts as a regulator of migration of enteric neural crest cells (ENCCs) by activating PP1, leading to dephosphorylation and subsequent activation of cofilin (COF1 or COF2) and repression of the integrin signaling through the RHO/ROCK pathway. The polypeptide is Phosphatase and actin regulator 4 (Phactr4) (Mus musculus (Mouse)).